A 584-amino-acid chain; its full sequence is MEAQYRNHDGDTSFSSLRVYLNSLSDTPSRFSRRAVSVSTSYDEMSRVRAVSGEQMRRTLRWYDLIGLGIGGMIGAGVFVTTGRASRLYAGPSIVVSYAIAGLCALLSAFCYTEFAVHLPVAGGAFSYIRITFGEFPAFITGANLIMDYVLSNAAVSRGFTAYLGSAFGISTSEWRFIVSGLPNGFNEIDPIAVIVVLAVTFVICYSTRESSKVNMVLTALHIAFIVFVIVMGFSKGDVKNLTRPDNPENPSGFFPFGVSGVFNGAAMVYLSYIGYDAVSTMAEEVKDPVKDIPMGISGSVAIVIVLYCLMAISMSMLLPYDLIDAEAPYSAAFSKSEGWEWVTRVVGIGASFGILTSLIVAMLGQARYMCVIGRSRVVPIWFAKVHPKTSTPVNASAFLGIFTAVLALFTDLNVLLNLVSIGTLFVFYMVANAVIFRRYVTVGYTEPWPTLSFLCLFSITSILFTLVWQLAPSGPPKWFILGASTVTAIAIVQIFHCVVPQARIPEFWGVPLMPWTPCVSIFLNIFLLGSLDAPSYIRFGFFSGLVVLVYVFYSVHASYDAEGDGSLDFKDVESLERINRVLS.

The transit peptide at 1–49 (MEAQYRNHDGDTSFSSLRVYLNSLSDTPSRFSRRAVSVSTSYDEMSRVR) directs the protein to the chloroplast. Transmembrane regions (helical) follow at residues 62–82 (WYDLIGLGIGGMIGAGVFVTT), 90–110 (AGPSIVVSYAIAGLCALLSAF), 131–151 (ITFGEFPAFITGANLIMDYVL), 185–205 (GFNEIDPIAVIVVLAVTFVIC), 214–234 (VNMVLTALHIAFIVFVIVMGF), 254–274 (FFPFGVSGVFNGAAMVYLSYI), 293–313 (IPMGISGSVAIVIVLYCLMAI), 346–366 (VVGIGASFGILTSLIVAMLGQ), 396–416 (ASAFLGIFTAVLALFTDLNVL), 417–437 (LNLVSIGTLFVFYMVANAVIF), 449–469 (WPTLSFLCLFSITSILFTLVW), 480–500 (FILGASTVTAIAIVQIFHCVV), 508–528 (FWGVPLMPWTPCVSIFLNIFL), and 540–560 (FGFFSGLVVLVYVFYSVHASY).

It belongs to the amino acid-polyamine-organocation (APC) superfamily. Cationic amino acid transporter (CAT) (TC 2.A.3.3) family.

Its subcellular location is the plastid. The protein resides in the chloroplast membrane. Its function is as follows. Permease involved in the transport of the cationic amino acids. The protein is Cationic amino acid transporter 7, chloroplastic (CAT7) of Arabidopsis thaliana (Mouse-ear cress).